Reading from the N-terminus, the 327-residue chain is MSAEILLILVIALLLDRVLGDPDWLWSRLTHPVVFFGKAVEYVDEALNRGEFTKAWLKFRGVVGILVLLAGATALGVVLARLFDVLGALGSLLEVVTVAVFLAQKSLADHVSRVAAGLRRDGLAGGREAVSMIVGRDPNTLDEPAVCRAAIESLAENFSDGVVAPAFWYAVAGLPGLLAYKMLNTADSMIGHKSPKYLHFGWASARLDDLANLPAARLSALLIAAGAYFRRGAEAAKTAIEVARRDHGLHRSPNSGWPEAAMAGATGVQLAGPRIYGGVKVDEPMMNDAGRAVAAIEDIEAAVTVFYAACSVMTFAFAAAALPLLLF.

A run of 4 helical transmembrane segments spans residues 63 to 83 (VGIL…ARLF), 84 to 104 (DVLG…FLAQ), 158 to 178 (FSDG…PGLL), and 305 to 325 (VFYA…LPLL).

This sequence belongs to the CobD/CbiB family.

It is found in the cell membrane. Its pathway is cofactor biosynthesis; adenosylcobalamin biosynthesis. In terms of biological role, converts cobyric acid to cobinamide by the addition of aminopropanol on the F carboxylic group. This Rhizobium meliloti (strain 1021) (Ensifer meliloti) protein is Cobalamin biosynthesis protein CobD.